The sequence spans 428 residues: Serine--tRNA ligase (428 aa).

An L-serine-binding site is contributed by 231–233; sequence TAE. ATP is bound by residues 262–264 and Val-278; that span reads RRE. Glu-285 lines the L-serine pocket. ATP is bound at residue 349–352; the sequence is EVSS. Ser-384 serves as a coordination point for L-serine.

This sequence belongs to the class-II aminoacyl-tRNA synthetase family. Type-1 seryl-tRNA synthetase subfamily. In terms of assembly, homodimer. The tRNA molecule binds across the dimer.

The protein resides in the cytoplasm. It catalyses the reaction tRNA(Ser) + L-serine + ATP = L-seryl-tRNA(Ser) + AMP + diphosphate + H(+). The enzyme catalyses tRNA(Sec) + L-serine + ATP = L-seryl-tRNA(Sec) + AMP + diphosphate + H(+). Its pathway is aminoacyl-tRNA biosynthesis; selenocysteinyl-tRNA(Sec) biosynthesis; L-seryl-tRNA(Sec) from L-serine and tRNA(Sec): step 1/1. Its function is as follows. Catalyzes the attachment of serine to tRNA(Ser). Is also able to aminoacylate tRNA(Sec) with serine, to form the misacylated tRNA L-seryl-tRNA(Sec), which will be further converted into selenocysteinyl-tRNA(Sec). In Chlamydia trachomatis serovar L2 (strain ATCC VR-902B / DSM 19102 / 434/Bu), this protein is Serine--tRNA ligase.